Consider the following 620-residue polypeptide: Chaperone protein HscA homolog (620 aa).

Belongs to the heat shock protein 70 family.

Its function is as follows. Chaperone involved in the maturation of iron-sulfur cluster-containing proteins. Has a low intrinsic ATPase activity which is markedly stimulated by HscB. The protein is Chaperone protein HscA homolog of Pseudomonas syringae pv. syringae (strain B728a).